A 101-amino-acid polypeptide reads, in one-letter code: ATP-dependent Clp protease adapter protein ClpS 1 (101 aa).

This sequence belongs to the ClpS family. Binds to the N-terminal domain of the chaperone ClpA.

Involved in the modulation of the specificity of the ClpAP-mediated ATP-dependent protein degradation. This is ATP-dependent Clp protease adapter protein ClpS 1 from Bradyrhizobium diazoefficiens (strain JCM 10833 / BCRC 13528 / IAM 13628 / NBRC 14792 / USDA 110).